We begin with the raw amino-acid sequence, 667 residues long: tRNA 5-methylaminomethyl-2-thiouridine biosynthesis bifunctional protein MnmC (667 aa).

Positions 1-215 (MKFINGILFN…KREMIRAYFN (215 aa)) are tRNA (mnm(5)s(2)U34)-methyltransferase. Positions 240 to 667 (IGAGIAGIVT…LIRKLKKGLK (428 aa)) are FAD-dependent cmnm(5)s(2)U34 oxidoreductase.

This sequence in the N-terminal section; belongs to the methyltransferase superfamily. tRNA (mnm(5)s(2)U34)-methyltransferase family. The protein in the C-terminal section; belongs to the DAO family. FAD is required as a cofactor.

The protein resides in the cytoplasm. The enzyme catalyses 5-aminomethyl-2-thiouridine(34) in tRNA + S-adenosyl-L-methionine = 5-methylaminomethyl-2-thiouridine(34) in tRNA + S-adenosyl-L-homocysteine + H(+). Functionally, catalyzes the last two steps in the biosynthesis of 5-methylaminomethyl-2-thiouridine (mnm(5)s(2)U) at the wobble position (U34) in tRNA. Catalyzes the FAD-dependent demodification of cmnm(5)s(2)U34 to nm(5)s(2)U34, followed by the transfer of a methyl group from S-adenosyl-L-methionine to nm(5)s(2)U34, to form mnm(5)s(2)U34. The chain is tRNA 5-methylaminomethyl-2-thiouridine biosynthesis bifunctional protein MnmC from Campylobacter hominis (strain ATCC BAA-381 / DSM 21671 / CCUG 45161 / LMG 19568 / NCTC 13146 / CH001A).